A 212-amino-acid chain; its full sequence is Large ribosomal subunit protein bL25 (212 aa).

Residues 1 to 25 (MSQSTIHKIAVKKRTETGKNENNRL) form a disordered region. Basic and acidic residues predominate over residues 13-24 (KRTETGKNENNR).

This sequence belongs to the bacterial ribosomal protein bL25 family. CTC subfamily. Part of the 50S ribosomal subunit; part of the 5S rRNA/L5/L18/L25 subcomplex. Contacts the 5S rRNA. Binds to the 5S rRNA independently of L5 and L18.

In terms of biological role, this is one of the proteins that binds to the 5S RNA in the ribosome where it forms part of the central protuberance. The polypeptide is Large ribosomal subunit protein bL25 (Leptospira borgpetersenii serovar Hardjo-bovis (strain JB197)).